Here is a 61-residue protein sequence, read N- to C-terminus: SPbeta prophage-derived uncharacterized protein YotK (61 aa).

A coiled-coil region spans residues 7 to 57; the sequence is SIQTLLNKMDRQMKTVKEAIEEKDLQRAHRNLINLADNNEELMQEIRWVKK.

This Bacillus subtilis (strain 168) protein is SPbeta prophage-derived uncharacterized protein YotK (yotK).